We begin with the raw amino-acid sequence, 372 residues long: Dof zinc finger protein DOF5.6 (372 aa).

The Dof-type zinc finger occupies 73 to 127; that stretch reads QKCPRCESTHTKFCYYNNYSLSQPRYFCKTCRRYWTKGGTLRNIPVGGGCRKNKK. 4 residues coordinate Zn(2+): cysteine 75, cysteine 78, cysteine 100, and cysteine 103. The tract at residues 117-146 is disordered; sequence PVGGGCRKNKKPSSSNSSSSTSSGKKPSNI. Over residues 128 to 145 the composition is skewed to low complexity; it reads PSSSNSSSSTSSGKKPSN.

In terms of tissue distribution, the PEAR proteins (e.g. DOF2.4, DOF5.1, DOF3.2, DOF1.1, DOF5.6 and DOF5.3) form a short-range concentration gradient that peaks at protophloem sieve elements (PSE). Preferentially expressed in the vasculature of all organs, including seedlings, roots, stems, buds, leaves, flowers and siliques, and particularly in the cambium, phloem and interfascicular parenchyma cells of inflorescence stems.

Its subcellular location is the nucleus. In terms of biological role, transcription factor that binds specifically to a 5'-AA[AG]G-3' consensus core sequence. Promotes expression. The PEAR proteins (e.g. DOF2.4, DOF5.1, DOF3.2, DOF1.1, DOF5.6 and DOF5.3) activate gene expression that promotes radial growth of protophloem sieve elements. Involved in the regulation of interfascicular cambium formation and vascular tissue development, particularly at a very early stage during inflorescence stem development; promotes both cambium activity and phloem specification, but prevents xylem specification. The protein is Dof zinc finger protein DOF5.6 of Arabidopsis thaliana (Mouse-ear cress).